The following is a 927-amino-acid chain: Heat shock protein hsp98 (927 aa).

Positions 2 to 162 constitute a Clp R domain; that stretch reads TSKMEFTDRA…TDAIQAIRGT (161 aa). 2 repeat regions span residues 7–87 and 99–162; these read FTDR…LVRL and MAPS…IRGT. Residues 179 to 428 are NBD1; it reads LAKFTIDMTA…AVRVARESQP (250 aa). ATP is bound at residue 224 to 231; that stretch reads GEPGVGKT. The stretch at 429-553 forms a coiled coil; the sequence is EIIDSLERKL…AALNAAAAET (125 aa). The segment at 454-473 is disordered; that stretch reads EASKARLEQAKKDAENVEEE. Residues 562-752 form an NBD2 region; it reads VGPDQINEIV…IVVMTSNLGA (191 aa). 635–642 serves as a coordination point for ATP; sequence GPSGTGKT. A disordered region spans residues 908–927; it reads EDAVDEVAPESEMDEDLYDD.

It belongs to the ClpA/ClpB family. As to quaternary structure, homohexamer, forming a ring with a central pore.

Its subcellular location is the cytoplasm. It localises to the nucleus. Required, in concert with Hsp40 and Hsp70 and small Hsps, for the dissociation, resolubilization and refolding of aggregates of damaged proteins after heat or other environmental stresses. Extracts proteins from aggregates by unfolding and threading them in an ATP-dependent process through the axial channel of the protein hexamer, after which they can be refolded by components of the Hsp70/Hsp40 chaperone system. The protein is Heat shock protein hsp98 (hsp98) of Neurospora crassa (strain ATCC 24698 / 74-OR23-1A / CBS 708.71 / DSM 1257 / FGSC 987).